We begin with the raw amino-acid sequence, 250 residues long: MSDDSSDVKPGPKGPEQPAVEQSPENVPAPTGEVHQVGARHGMFGVRGTGDTSGYGGLNQAIVLPGDAQRPYGGWFDEVADGLAAATREAGLEIAAPRVVIHRGEITFHLRREDLLPVAQVLRDDERLRFEFCAGVSGVHYPDETGRELHAVYHLLSMTHNRRIRLEVAVPDADPHIPSIVPVYPTNDWHERETYDMFGIIFDGHPALTRILMPDDWPGHPQRKDYPLGGVPVEYKGGTVPPPDQRRSYN.

Disordered regions lie at residues 1-33 (MSDDSSDVKPGPKGPEQPAVEQSPENVPAPTGE) and 228-250 (LGGVPVEYKGGTVPPPDQRRSYN).

This sequence belongs to the complex I 30 kDa subunit family. As to quaternary structure, NDH-1 is composed of 14 different subunits. Subunits NuoB, C, D, E, F, and G constitute the peripheral sector of the complex.

It is found in the cell membrane. The enzyme catalyses a quinone + NADH + 5 H(+)(in) = a quinol + NAD(+) + 4 H(+)(out). In terms of biological role, NDH-1 shuttles electrons from NADH, via FMN and iron-sulfur (Fe-S) centers, to quinones in the respiratory chain. The immediate electron acceptor for the enzyme in this species is believed to be a menaquinone. Couples the redox reaction to proton translocation (for every two electrons transferred, four hydrogen ions are translocated across the cytoplasmic membrane), and thus conserves the redox energy in a proton gradient. The sequence is that of NADH-quinone oxidoreductase subunit C from Nocardioides sp. (strain ATCC BAA-499 / JS614).